A 330-amino-acid chain; its full sequence is Olfactory receptor 5P73 (330 aa).

At 1–28 (MAFLEDGNHTTVTEFFLLGLTDDPVLRD) the chain is on the extracellular side. Residue asparagine 8 is glycosylated (N-linked (GlcNAc...) asparagine). The helical transmembrane segment at 29 to 49 (ILFIIILCIYLVTVSGNLSTI) threads the bilayer. Residues 50–57 (LLIRVSSQ) are Cytoplasmic-facing. Residues 58-78 (LHHPMYFILSHLASVDIGISS) traverse the membrane as a helical segment. Topologically, residues 79 to 102 (SVTPNMLATFLVKQNTISYIGCSI) are extracellular. A disulfide bridge connects residues cysteine 100 and cysteine 192. Residues 103-123 (QFTSAAFFGTVECFLLATMAY) form a helical membrane-spanning segment. Residues 124–136 (DRFVAICNPLLYS) are Cytoplasmic-facing. A helical membrane pass occupies residues 137–157 (TKMSTEACIQLVVGSYIQGFL). Residues 158–199 (NASFFTLSFFSLFFCGPNRINDFYCDFAPLLELSCSDVTVAV) lie on the Extracellular side of the membrane. A helical membrane pass occupies residues 200 to 220 (VITSISAGFITLTTVFVIAIS). Residues 221-240 (YSCIFITIMKMHSTESRCKA) are Cytoplasmic-facing. Residues 241–261 (FSTCTSHLTAVILFYGTAIFI) traverse the membrane as a helical segment. The Extracellular segment spans residues 262-274 (YVMPKSSYSTDQN). Residues 275-295 (KVLSIFYTVVIPMLNPLIYSL) traverse the membrane as a helical segment. The Cytoplasmic segment spans residues 296–330 (RNNEIKEALKRHLGKKVFSYGNLFCKTHYNHNYPV).

This sequence belongs to the G-protein coupled receptor 1 family.

It localises to the cell membrane. Potential odorant receptor. This Mus musculus (Mouse) protein is Olfactory receptor 5P73.